A 414-amino-acid chain; its full sequence is Zinc metalloproteinase-disintegrin-like batroxstatin-3 (414 aa).

Asn-7 and Asn-70 each carry an N-linked (GlcNAc...) asparagine glycan. Positions 10–204 (KYIKLVIVAD…HTPQCILNEP (195 aa)) constitute a Peptidase M12B domain. Cystine bridges form between Cys-121-Cys-199, Cys-161-Cys-183, and Cys-163-Cys-168. His-146 lines the Zn(2+) pocket. Glu-147 is an active-site residue. Residues His-150 and His-156 each coordinate Zn(2+). The region spanning 212–298 (PEVCGNYLLE…HCPTDRFHRN (87 aa)) is the Disintegrin domain. 5 residues coordinate Ca(2+): Val-214, Asn-217, Glu-221, Glu-224, and Asp-227. Cystine bridges form between Cys-215–Cys-244, Cys-226–Cys-239, Cys-228–Cys-234, Cys-238–Cys-261, Cys-252–Cys-258, Cys-257–Cys-283, Cys-270–Cys-290, Cys-277–Cys-309, Cys-302–Cys-314, Cys-321–Cys-371, Cys-336–Cys-381, Cys-349–Cys-359, Cys-366–Cys-403, and Cys-397–Cys-408. Residues 276-278 (ECD) carry the D/ECD-tripeptide motif. Positions 278, 281, 293, and 294 each coordinate Ca(2+).

The protein belongs to the venom metalloproteinase (M12B) family. P-III subfamily. P-IIIa sub-subfamily. In terms of assembly, monomer. The cofactor is Zn(2+). As to expression, expressed by the venom gland.

It localises to the secreted. Its function is as follows. Snake venom zinc metalloprotease that induces apoptosis in vascular endothelial cells (VEC), without degrading the extracellular matrix (it cannot cleave collagen) or inhibiting adhesion of VEC. Has also fibrinogenolytic and hemorrhagic activities. The protein is Zinc metalloproteinase-disintegrin-like batroxstatin-3 of Bothrops atrox (Barba amarilla).